A 188-amino-acid polypeptide reads, in one-letter code: Putative 3-methyladenine DNA glycosylase (188 aa).

It belongs to the DNA glycosylase MPG family.

The protein is Putative 3-methyladenine DNA glycosylase of Ehrlichia ruminantium (Cowdria ruminantium).